The following is a 511-amino-acid chain: ATP synthase subunit alpha 1 (511 aa).

An ATP-binding site is contributed by 174–181 (GDRQTGKT).

The protein belongs to the ATPase alpha/beta chains family. In terms of assembly, F-type ATPases have 2 components, CF(1) - the catalytic core - and CF(0) - the membrane proton channel. CF(1) has five subunits: alpha(3), beta(3), gamma(1), delta(1), epsilon(1). CF(0) has four main subunits: a(1), b(1), b'(1) and c(9-12).

It localises to the cell inner membrane. The catalysed reaction is ATP + H2O + 4 H(+)(in) = ADP + phosphate + 5 H(+)(out). Produces ATP from ADP in the presence of a proton gradient across the membrane. The alpha chain is a regulatory subunit. In Chlorobium luteolum (strain DSM 273 / BCRC 81028 / 2530) (Pelodictyon luteolum), this protein is ATP synthase subunit alpha 1.